The following is a 101-amino-acid chain: NAD(P)H-quinone oxidoreductase subunit 4L, chloroplastic (101 aa).

A run of 3 helical transmembrane segments spans residues 2–22 (MFER…YGLI), 32–52 (ICLE…SDLF), and 61–81 (IFAI…LSIL).

Belongs to the complex I subunit 4L family. NDH is composed of at least 16 different subunits, 5 of which are encoded in the nucleus.

It is found in the plastid. Its subcellular location is the chloroplast thylakoid membrane. It carries out the reaction a plastoquinone + NADH + (n+1) H(+)(in) = a plastoquinol + NAD(+) + n H(+)(out). The catalysed reaction is a plastoquinone + NADPH + (n+1) H(+)(in) = a plastoquinol + NADP(+) + n H(+)(out). Functionally, NDH shuttles electrons from NAD(P)H:plastoquinone, via FMN and iron-sulfur (Fe-S) centers, to quinones in the photosynthetic chain and possibly in a chloroplast respiratory chain. The immediate electron acceptor for the enzyme in this species is believed to be plastoquinone. Couples the redox reaction to proton translocation, and thus conserves the redox energy in a proton gradient. The polypeptide is NAD(P)H-quinone oxidoreductase subunit 4L, chloroplastic (Zea mays (Maize)).